Reading from the N-terminus, the 103-residue chain is Large ribosomal subunit protein bL21 (103 aa).

The protein belongs to the bacterial ribosomal protein bL21 family. Part of the 50S ribosomal subunit. Contacts protein L20.

In terms of biological role, this protein binds to 23S rRNA in the presence of protein L20. This is Large ribosomal subunit protein bL21 from Rhodococcus erythropolis (strain PR4 / NBRC 100887).